The sequence spans 129 residues: Succinate dehydrogenase subunit 3-1, mitochondrial (129 aa).

The N-terminal 58 residues, 1-58 (MEKYHSNSRFAPFRDAPFALRGALGSSGSSFSSIDSLRRSSTLEQARGYTSRPLGAVR), are a transit peptide targeting the mitochondrion. Positions 25–35 (GSSGSSFSSID) are enriched in low complexity. The disordered stretch occupies residues 25–80 (GSSGSSFSSIDSLRRSSTLEQARGYTSRPLGAVRPKMLPSGCRPLHTSHPLSAPVA). His87 lines the heme pocket. The helical transmembrane segment at 105–127 (IFGAALGAAIISIPLATKFSLMF) threads the bilayer.

As to quaternary structure, component of complex II composed of eight subunits in plants: four classical SDH subunits SDH1, SDH2, SDH3 and SDH4 (a flavoprotein (FP), an iron-sulfur protein (IP), and a cytochrome b composed of a large and a small subunit.), as well as four subunits unknown in mitochondria from bacteria and heterotrophic eukaryotes. The cofactor is heme.

Its subcellular location is the mitochondrion inner membrane. The protein operates within carbohydrate metabolism; tricarboxylic acid cycle. In terms of biological role, membrane-anchoring subunit of succinate dehydrogenase (SDH). This chain is Succinate dehydrogenase subunit 3-1, mitochondrial, found in Oryza sativa subsp. japonica (Rice).